Consider the following 317-residue polypeptide: Putative HTH-type transcriptional regulatory protein Mlab_0160 (317 aa).

Residues 132 to 189 (LRTLREEQAMSLGDLAHALGVSRRTISKYEGGMGTTLEMAMRLEEFFNDDIVMPIDLL) enclose the HTH cro/C1-type domain. The segment at residues 143 to 162 (LGDLAHALGVSRRTISKYEG) is a DNA-binding region (H-T-H motif). The disordered stretch occupies residues 199–219 (VPASLASGHNPESDAQPKRPE). The span at 209 to 219 (PESDAQPKRPE) shows a compositional bias: basic and acidic residues.

The sequence is that of Putative HTH-type transcriptional regulatory protein Mlab_0160 from Methanocorpusculum labreanum (strain ATCC 43576 / DSM 4855 / Z).